We begin with the raw amino-acid sequence, 284 residues long: MKKIAIFAKVHDPRCVGIAEELVEWLLARGLSPLVEPHLAKHISCSYTAKRDDIPEQADLVVVLGGDGTLISVARLVGDRQVPILGVNLGSLGFLTEITLTEMYPALERCLKGDYEVSERMMLRVSLHRGGAEIEGRQVLNDVVINKGALARIIDLETEVDGRYLTTFKADGLIISTPTGSTGYSLSANGPIIHPQLDCLVITPICPHTLTNRPIVVSGDALITISLQSVNEDVFLTLDGQVGFEVKHGDQIRIQRAERQTRLVQSRSKDYFEVLRTKLKWGER.

The active-site Proton acceptor is the Asp-67. NAD(+) is bound by residues 67 to 68 (DG), 141 to 142 (ND), Arg-152, Lys-169, Asp-171, 182 to 187 (TGYSLS), and Gln-241.

It belongs to the NAD kinase family. A divalent metal cation is required as a cofactor.

The protein resides in the cytoplasm. The enzyme catalyses NAD(+) + ATP = ADP + NADP(+) + H(+). In terms of biological role, involved in the regulation of the intracellular balance of NAD and NADP, and is a key enzyme in the biosynthesis of NADP. Catalyzes specifically the phosphorylation on 2'-hydroxyl of the adenosine moiety of NAD to yield NADP. The protein is NAD kinase of Geotalea daltonii (strain DSM 22248 / JCM 15807 / FRC-32) (Geobacter daltonii).